The following is a 183-amino-acid chain: UPF0114 protein HI_0507 (183 aa).

3 consecutive transmembrane segments (helical) span residues 30–50, 68–88, and 150–170; these read LQVP…YKFI, IMLG…LVMV, and TMMW…ALAY.

This sequence belongs to the UPF0114 family.

The protein resides in the cell membrane. This Haemophilus influenzae (strain ATCC 51907 / DSM 11121 / KW20 / Rd) protein is UPF0114 protein HI_0507.